A 406-amino-acid polypeptide reads, in one-letter code: Homocitrate synthase AksA (406 aa).

Positions 32–285 (IYIYDTTLRD…DLGLNLEVLP (254 aa)) constitute a Pyruvate carboxyltransferase domain.

It belongs to the alpha-IPM synthase/homocitrate synthase family.

It carries out the reaction acetyl-CoA + 2-oxoglutarate + H2O = (2R)-homocitrate + CoA + H(+). The catalysed reaction is 2-oxoadipate + acetyl-CoA + H2O = (R)-dihomocitrate + CoA + H(+). It catalyses the reaction 2-oxoheptanedioate + acetyl-CoA + H2O = (R)-trihomocitrate + CoA + H(+). Its pathway is organic acid metabolism; 2-oxosuberate biosynthesis. In terms of biological role, catalyzes the condensation of alpha-ketoglutarate and acetyl-CoA to form (R)-homocitrate. Can also catalyze the condensation of alpha-ketoadipate with acetyl-CoA to form (R)-homo(2)citrate, and the condensation of alpha-ketopimelate with acetyl-CoA to form (R)-homo(3)citrate. These reactions are part of the biosynthesis pathway of coenzyme B and biotin. The sequence is that of Homocitrate synthase AksA (aksA) from Methanocaldococcus jannaschii (strain ATCC 43067 / DSM 2661 / JAL-1 / JCM 10045 / NBRC 100440) (Methanococcus jannaschii).